The chain runs to 237 residues: Ras-related protein Rab-33A (237 aa).

The GTP site is built by Asn-46, Val-47, Gly-48, Lys-49, Thr-50, Cys-51, Thr-65, and Thr-68. Position 50 (Thr-50) interacts with Mg(2+). The Switch 1 signature appears at 59–71 (GTFPDKTEATIGV). Positions 68 and 91 each coordinate Mg(2+). Positions 92 to 111 (TAGQERFRKSMVEHYYRNVH) match the Switch 2 motif. Gly-94, Asn-151, Lys-152, Asp-154, Ala-182, and Lys-183 together coordinate GTP. S-geranylgeranyl cysteine attachment occurs at residues Cys-235 and Cys-237. At Cys-237 the chain carries Cysteine methyl ester.

Belongs to the small GTPase superfamily. Rab family. Interacts with ATG16L1; the interaction is important for autophagosome formation. Requires Mg(2+) as cofactor. As to expression, expressed predominantly in brain. Weak expression in ovary.

The protein resides in the cell membrane. The catalysed reaction is GTP + H2O = GDP + phosphate + H(+). Regulated by guanine nucleotide exchange factors (GEFs) which promote the exchange of bound GDP for free GTP. Regulated by GTPase activating proteins (GAPs) which increase the GTP hydrolysis activity. Inhibited by GDP dissociation inhibitors (GDIs). Functionally, the small GTPases Rab are key regulators of intracellular membrane trafficking, from the formation of transport vesicles to their fusion with membranes. Rabs cycle between an inactive GDP-bound form and an active GTP-bound form that is able to recruit to membranes different sets of downstream effectors directly responsible for vesicle formation, movement, tethering and fusion. Modulates autophagosome formation through interaction with ATG16L1. This chain is Ras-related protein Rab-33A, found in Mus musculus (Mouse).